The following is a 280-amino-acid chain: Maltodextrin transport system permease protein MalD (280 aa).

A run of 6 helical transmembrane segments spans residues 15-35 (LTYLYLIGLSIVIIYPLLITI), 77-97 (LIIALITMAVQTSIIVLAGYA), 110-130 (LVFFLIIQMVPTMAALTAFFV), 142-162 (WFLIFLYVGGGIPMNAWLMKG), 200-220 (VQALWAFMGPFGDYILSSFLL), and 244-264 (IAYFSAGAILIALPICILFFF). The 193-residue stretch at 73–265 (YLNTLIIALI…LPICILFFFL (193 aa)) folds into the ABC transmembrane type-1 domain.

It belongs to the binding-protein-dependent transport system permease family. MalFG subfamily.

The protein localises to the cell membrane. In terms of biological role, part of the binding-protein-dependent transport system for maltodextrin; probably responsible for the translocation of the substrate across the membrane. The chain is Maltodextrin transport system permease protein MalD (malD) from Streptococcus pneumoniae (strain ATCC BAA-255 / R6).